A 610-amino-acid polypeptide reads, in one-letter code: Phosphomethylpyrimidine synthase (610 aa).

Substrate is bound by residues Asn-216, Met-245, Tyr-274, His-310, 330-332 (SRG), 371-374 (DGLR), and Glu-410. Zn(2+) is bound at residue His-414. A substrate-binding site is contributed by Tyr-437. Residue His-478 coordinates Zn(2+). Cys-558, Cys-561, and Cys-566 together coordinate [4Fe-4S] cluster.

The protein belongs to the ThiC family. Homodimer. [4Fe-4S] cluster is required as a cofactor.

The catalysed reaction is 5-amino-1-(5-phospho-beta-D-ribosyl)imidazole + S-adenosyl-L-methionine = 4-amino-2-methyl-5-(phosphooxymethyl)pyrimidine + CO + 5'-deoxyadenosine + formate + L-methionine + 3 H(+). The protein operates within cofactor biosynthesis; thiamine diphosphate biosynthesis. In terms of biological role, catalyzes the synthesis of the hydroxymethylpyrimidine phosphate (HMP-P) moiety of thiamine from aminoimidazole ribotide (AIR) in a radical S-adenosyl-L-methionine (SAM)-dependent reaction. The protein is Phosphomethylpyrimidine synthase of Rhizobium etli (strain ATCC 51251 / DSM 11541 / JCM 21823 / NBRC 15573 / CFN 42).